Here is a 238-residue protein sequence, read N- to C-terminus: Probable transcriptional regulatory protein SMU_1789c (238 aa).

It belongs to the TACO1 family. YeeN subfamily.

It localises to the cytoplasm. The sequence is that of Probable transcriptional regulatory protein SMU_1789c from Streptococcus mutans serotype c (strain ATCC 700610 / UA159).